We begin with the raw amino-acid sequence, 346 residues long: NSSLPTNISGGTPAVSAGYLFLDIVTYLVFAVTFVLGVLGNGLVIWVAGFRMTHTVTTISYLNLAVADFCFTSTLPFFMVKKAMGGHWPFGWFLCKFIFTIVDINLFGSVFLIALIALDRCVCVLHPVWTQNHRTVSLAKKVIIGPWVMALLLTLPVIIRVTTVPGKMGTVACTFNFSPWTNDPKERIKVAVAMLTVRGIIRFIIGFSAPMSIVAVSYGLIATKIDKQGLIKSSRTLRVLSFVAAAFFLSWSPYQVVALIATVRIRELLQGMYKEIGIAVDVTSALAFFNSCLNPMLYVFMGQDFRERLIHALPASLERALTEDSTQTSDTATNSTLPSAEVALQA.

N-linked (GlcNAc...) asparagine glycans are attached at residues Asn1 and Asn7. At 1–24 the chain is on the extracellular side; that stretch reads NSSLPTNISGGTPAVSAGYLFLDI. The chain crosses the membrane as a helical span at residues 25-47; it reads VTYLVFAVTFVLGVLGNGLVIWV. The Cytoplasmic portion of the chain corresponds to 48–58; it reads AGFRMTHTVTT. Residues 59–80 form a helical membrane-spanning segment; that stretch reads ISYLNLAVADFCFTSTLPFFMV. At 81–97 the chain is on the extracellular side; the sequence is KKAMGGHWPFGWFLCKF. Cysteines 95 and 173 form a disulfide. The helical transmembrane segment at 98 to 118 threads the bilayer; it reads IFTIVDINLFGSVFLIALIAL. Residues 119-137 are Cytoplasmic-facing; it reads DRCVCVLHPVWTQNHRTVS. A helical transmembrane segment spans residues 138-159; the sequence is LAKKVIIGPWVMALLLTLPVII. At 160–202 the chain is on the extracellular side; it reads RVTTVPGKMGTVACTFNFSPWTNDPKERIKVAVAMLTVRGIIR. Residues 203–223 form a helical membrane-spanning segment; it reads FIIGFSAPMSIVAVSYGLIAT. The Cytoplasmic segment spans residues 224-239; the sequence is KIDKQGLIKSSRTLRV. A helical transmembrane segment spans residues 240 to 263; the sequence is LSFVAAAFFLSWSPYQVVALIATV. Over 264–282 the chain is Extracellular; sequence RIRELLQGMYKEIGIAVDV. A helical membrane pass occupies residues 283-302; that stretch reads TSALAFFNSCLNPMLYVFMG. Over 303-346 the chain is Cytoplasmic; it reads QDFRERLIHALPASLERALTEDSTQTSDTATNSTLPSAEVALQA. The segment at 322 to 346 is disordered; it reads TEDSTQTSDTATNSTLPSAEVALQA. Polar residues predominate over residues 323 to 338; that stretch reads EDSTQTSDTATNSTLP.

It belongs to the G-protein coupled receptor 1 family. Phosphorylated; which is necessary for desensitization.

Its subcellular location is the cell membrane. Its function is as follows. High affinity receptor for N-formyl-methionyl peptides (fMLP), which are powerful neutrophil chemotactic factors. Binding of fMLP to the receptor stimulates intracellular calcium mobilization and superoxide anion release. This response is mediated via a G-protein that activates a phosphatidylinositol-calcium second messenger system. Receptor for TAFA4, mediates its effects on chemoattracting macrophages, promoting phagocytosis and increasing ROS release. Receptor for cathepsin CTSG, leading to increased phagocyte chemotaxis. The polypeptide is fMet-Leu-Phe receptor (FPR1) (Gorilla gorilla gorilla (Western lowland gorilla)).